Here is an 818-residue protein sequence, read N- to C-terminus: Glycogen phosphorylase (818 aa).

Lys667 is modified (N6-(pyridoxal phosphate)lysine).

The protein belongs to the glycogen phosphorylase family. Requires pyridoxal 5'-phosphate as cofactor.

The enzyme catalyses [(1-&gt;4)-alpha-D-glucosyl](n) + phosphate = [(1-&gt;4)-alpha-D-glucosyl](n-1) + alpha-D-glucose 1-phosphate. In terms of biological role, phosphorylase is an important allosteric enzyme in carbohydrate metabolism. Enzymes from different sources differ in their regulatory mechanisms and in their natural substrates. However, all known phosphorylases share catalytic and structural properties. The sequence is that of Glycogen phosphorylase (glgP) from Pasteurella multocida (strain Pm70).